We begin with the raw amino-acid sequence, 102 residues long: uncharacterized protein (102 aa).

2 helical membrane passes run 28 to 48 (YLNLLLILEAILCPVDSLISI) and 81 to 101 (LSVLYLDLCCSGLIIAEAGIG).

It localises to the membrane. This is an uncharacterized protein from Saccharomyces cerevisiae (strain ATCC 204508 / S288c) (Baker's yeast).